A 397-amino-acid chain; its full sequence is Dual-specificity RNA methyltransferase RlmN (397 aa).

The active-site Proton acceptor is the Glu-130. Positions 138–377 constitute a Radical SAM core domain; the sequence is VEDRGAVCIS…ASPIRTPRGR (240 aa). A disulfide bond links Cys-145 and Cys-383. Cys-152, Cys-156, and Cys-159 together coordinate [4Fe-4S] cluster. S-adenosyl-L-methionine is bound by residues 209 to 210, Ser-241, 263 to 265, and Asn-340; these read GE and SLH. Residue Cys-383 is the S-methylcysteine intermediate of the active site.

The protein belongs to the radical SAM superfamily. RlmN family. The cofactor is [4Fe-4S] cluster.

The protein resides in the cytoplasm. It carries out the reaction adenosine(2503) in 23S rRNA + 2 reduced [2Fe-2S]-[ferredoxin] + 2 S-adenosyl-L-methionine = 2-methyladenosine(2503) in 23S rRNA + 5'-deoxyadenosine + L-methionine + 2 oxidized [2Fe-2S]-[ferredoxin] + S-adenosyl-L-homocysteine. The catalysed reaction is adenosine(37) in tRNA + 2 reduced [2Fe-2S]-[ferredoxin] + 2 S-adenosyl-L-methionine = 2-methyladenosine(37) in tRNA + 5'-deoxyadenosine + L-methionine + 2 oxidized [2Fe-2S]-[ferredoxin] + S-adenosyl-L-homocysteine. Functionally, specifically methylates position 2 of adenine 2503 in 23S rRNA and position 2 of adenine 37 in tRNAs. m2A2503 modification seems to play a crucial role in the proofreading step occurring at the peptidyl transferase center and thus would serve to optimize ribosomal fidelity. In Granulibacter bethesdensis (strain ATCC BAA-1260 / CGDNIH1), this protein is Dual-specificity RNA methyltransferase RlmN.